The following is a 65-amino-acid chain: uncharacterized protein (65 aa).

The next 2 helical transmembrane spans lie at T4–P24 and F45–G65.

It localises to the cell membrane. This is an uncharacterized protein from Escherichia coli O157:H7.